The primary structure comprises 395 residues: Subtilisin-like protease 5 (395 aa).

An N-terminal signal peptide occupies residues 1–19 (MGFLTVLYLSLAALSVTNA). The propeptide occupies 20 to 115 (AQIMSAPNGA…VEPDAIISQH (96 aa)). An Inhibitor I9 domain is found at 36-112 (YIVVMKDDTS…VAFVEPDAII (77 aa)). Residues 124–395 (PWGLSRLSNR…RRLLYNGSGR (272 aa)) enclose the Peptidase S8 domain. Active-site charge relay system residues include Asp-155 and His-186. N-linked (GlcNAc...) asparagine glycosylation is found at Asn-229 and Asn-247. Ser-341 (charge relay system) is an active-site residue. Residues 374 to 395 (QPTIHNPGPDTTRRLLYNGSGR) form a disordered region. An N-linked (GlcNAc...) asparagine glycan is attached at Asn-391.

The protein belongs to the peptidase S8 family.

Its subcellular location is the secreted. Functionally, secreted subtilisin-like serine protease with keratinolytic activity that contributes to pathogenicity. This Arthroderma otae (strain ATCC MYA-4605 / CBS 113480) (Microsporum canis) protein is Subtilisin-like protease 5 (SUB5).